Consider the following 150-residue polypeptide: D-aminoacyl-tRNA deacylase (150 aa).

The Gly-cisPro motif, important for rejection of L-amino acids motif lies at 133-134 (GP).

Belongs to the DTD family. In terms of assembly, homodimer.

The protein resides in the cytoplasm. The enzyme catalyses glycyl-tRNA(Ala) + H2O = tRNA(Ala) + glycine + H(+). It carries out the reaction a D-aminoacyl-tRNA + H2O = a tRNA + a D-alpha-amino acid + H(+). Its function is as follows. An aminoacyl-tRNA editing enzyme that deacylates mischarged D-aminoacyl-tRNAs. Also deacylates mischarged glycyl-tRNA(Ala), protecting cells against glycine mischarging by AlaRS. Acts via tRNA-based rather than protein-based catalysis; rejects L-amino acids rather than detecting D-amino acids in the active site. By recycling D-aminoacyl-tRNA to D-amino acids and free tRNA molecules, this enzyme counteracts the toxicity associated with the formation of D-aminoacyl-tRNA entities in vivo and helps enforce protein L-homochirality. The protein is D-aminoacyl-tRNA deacylase of Micrococcus luteus (strain ATCC 4698 / DSM 20030 / JCM 1464 / CCM 169 / CCUG 5858 / IAM 1056 / NBRC 3333 / NCIMB 9278 / NCTC 2665 / VKM Ac-2230) (Micrococcus lysodeikticus).